The following is a 538-amino-acid chain: Putative cysteine ligase BshC (538 aa).

A coiled-coil region spans residues valine 421–asparagine 485.

The protein belongs to the BshC family.

Involved in bacillithiol (BSH) biosynthesis. May catalyze the last step of the pathway, the addition of cysteine to glucosamine malate (GlcN-Mal) to generate BSH. In Bacillus cytotoxicus (strain DSM 22905 / CIP 110041 / 391-98 / NVH 391-98), this protein is Putative cysteine ligase BshC.